A 147-amino-acid polypeptide reads, in one-letter code: Echinoidin (147 aa).

The C-type lectin domain occupies 1-143 (GCCPTFWTSF…STRHYLICKL (143 aa)). Intrachain disulfides connect cysteine 3-cysteine 14, cysteine 31-cysteine 141, and cysteine 116-cysteine 132. The O-linked (Hex) serine glycan is linked to serine 38. A Cell attachment site motif is present at residues 39–41 (RGD).

Homodimer; disulfide-linked. The identity of the saccharide is not reported in PubMed:3571253, and it is unlikely to be N-acetylgalactosamine. The sugar attached to Ser-38 is represented simply as Hex. As to expression, coelemic fluid.

The protein resides in the secreted. Its function is as follows. Role in the defense system of the organism against microorganisms. This lectin is specific for Gal-GalNAc. In Heliocidaris crassispina (Sea urchin), this protein is Echinoidin.